The primary structure comprises 402 residues: UDP-GlcNAc:betaGal beta-1,3-N-acetylglucosaminyltransferase 9 (402 aa).

Over 1–10 (MRRRLRLRRD) the chain is Cytoplasmic. A helical; Signal-anchor for type II membrane protein transmembrane segment spans residues 11–27 (ALLTLLLGASLGLLLYA). At 28-402 (QRDGAAPTAS…VAAGPFQWDS (375 aa)) the chain is on the lumenal side. Residues 32–47 (AAPTASAPRGRGRAAP) are compositionally biased toward low complexity. A disordered region spans residues 32–83 (AAPTASAPRGRGRAAPRPTPGPRAFQLPDAGAAPPAYEGDTPAPPTPTGPFD).

The protein belongs to the glycosyltransferase 31 family.

It localises to the golgi apparatus membrane. The polypeptide is UDP-GlcNAc:betaGal beta-1,3-N-acetylglucosaminyltransferase 9 (Homo sapiens (Human)).